The sequence spans 367 residues: Putative zinc metalloprotease mll0638 (367 aa).

Residue H20 coordinates Zn(2+). Residue E21 is part of the active site. Residue H24 participates in Zn(2+) binding. The next 3 helical transmembrane spans lie at 108–130 (ATVVAGPLFNFLLTIVVFSVLFA), 291–313 (LGFEWLVQLVALLSVGIGFLNLL), and 343–365 (MAYRAGLLLVLCFMGFVFWNDLF). A PDZ domain is found at 121 to 196 (TIVVFSVLFA…ITFVMLRDGK (76 aa)).

Belongs to the peptidase M50B family. It depends on Zn(2+) as a cofactor.

The protein localises to the cell inner membrane. The sequence is that of Putative zinc metalloprotease mll0638 from Mesorhizobium japonicum (strain LMG 29417 / CECT 9101 / MAFF 303099) (Mesorhizobium loti (strain MAFF 303099)).